Reading from the N-terminus, the 508-residue chain is Histidine ammonia-lyase (508 aa).

Positions 141–143 (ASG) form a cross-link, 5-imidazolinone (Ala-Gly). At Ser-142 the chain carries 2,3-didehydroalanine (Ser).

Belongs to the PAL/histidase family. In terms of processing, contains an active site 4-methylidene-imidazol-5-one (MIO), which is formed autocatalytically by cyclization and dehydration of residues Ala-Ser-Gly.

Its subcellular location is the cytoplasm. It catalyses the reaction L-histidine = trans-urocanate + NH4(+). The protein operates within amino-acid degradation; L-histidine degradation into L-glutamate; N-formimidoyl-L-glutamate from L-histidine: step 1/3. The polypeptide is Histidine ammonia-lyase (hutH) (Bacillus subtilis (strain 168)).